The following is a 211-amino-acid chain: Thymidylate kinase (211 aa).

10-17 (GVEGCGKT) contacts ATP.

This sequence belongs to the thymidylate kinase family.

It carries out the reaction dTMP + ATP = dTDP + ADP. Functionally, phosphorylation of dTMP to form dTDP in both de novo and salvage pathways of dTTP synthesis. The chain is Thymidylate kinase from Trichormus variabilis (strain ATCC 29413 / PCC 7937) (Anabaena variabilis).